Reading from the N-terminus, the 251-residue chain is Astacin (251 aa).

An N-terminal signal peptide occupies residues 1–15 (MQCAVLLVLLGVVAA). Residues 16 to 49 (SPIIPEAARALYYNDGMFEGDIKLRAGRQPARVG) constitute a propeptide, activation peptide. The Peptidase M12A domain maps to 50 to 248 (AAILGDEYLW…INNLYTNECS (199 aa)). 2 cysteine pairs are disulfide-bonded: cysteine 91–cysteine 247 and cysteine 113–cysteine 133. Residue histidine 141 participates in Zn(2+) binding. Glutamate 142 is a catalytic residue. Zn(2+) is bound by residues histidine 145 and histidine 151. A propeptide spanning residues 250-251 (RH) is cleaved from the precursor.

As to quaternary structure, monomer. Zn(2+) serves as cofactor.

It carries out the reaction Hydrolysis of peptide bonds in substrates containing five or more amino acids, preferentially with Ala in P1', and Pro in P2'.. Functionally, metalloprotease. This protease prefers to cleave in front of small aliphatic residues (P1'). The presence of Lys or Arg in the P1 and P2 position yields high-turnover substrates. In the P3 position the enzyme prefers Pro &gt; Val &gt; Leu &gt; Ala &gt; Gly. This chain is Astacin, found in Astacus astacus (Noble crayfish).